Reading from the N-terminus, the 214-residue chain is Large ribosomal subunit protein uL1 (214 aa).

This sequence belongs to the universal ribosomal protein uL1 family. Part of the 50S ribosomal subunit.

Its function is as follows. Binds directly to 23S rRNA. Probably involved in E site tRNA release. In terms of biological role, protein L1 is also a translational repressor protein, it controls the translation of its operon by binding to its mRNA. This Methanoregula boonei (strain DSM 21154 / JCM 14090 / 6A8) protein is Large ribosomal subunit protein uL1.